The following is a 310-amino-acid chain: GPN-loop GTPase 2 (310 aa).

Residue Ala-2 is modified to N-acetylalanine. 19–24 (GSGKTT) contributes to the GTP binding site. The Gly-Pro-Asn (GPN)-loop; involved in dimer interface motif lies at 76–78 (GPN). Residue 178–181 (SKMD) coordinates GTP.

It belongs to the GPN-loop GTPase family. In terms of assembly, heterodimers with GPN1 or GPN3. Binds to RNA polymerase II (RNAPII).

Its function is as follows. Small GTPase required for proper localization of RNA polymerase II and III (RNAPII and RNAPIII). May act at an RNAP assembly step prior to nuclear import. The chain is GPN-loop GTPase 2 from Sus scrofa (Pig).